Here is a 297-residue protein sequence, read N- to C-terminus: 4-hydroxy-tetrahydrodipicolinate synthase (297 aa).

Pyruvate is bound at residue Thr-55. The Proton donor/acceptor role is filled by Tyr-144. Catalysis depends on Lys-172, which acts as the Schiff-base intermediate with substrate. Ile-213 provides a ligand contact to pyruvate.

The protein belongs to the DapA family. Homotetramer; dimer of dimers.

It localises to the cytoplasm. The catalysed reaction is L-aspartate 4-semialdehyde + pyruvate = (2S,4S)-4-hydroxy-2,3,4,5-tetrahydrodipicolinate + H2O + H(+). Its pathway is amino-acid biosynthesis; L-lysine biosynthesis via DAP pathway; (S)-tetrahydrodipicolinate from L-aspartate: step 3/4. In terms of biological role, catalyzes the condensation of (S)-aspartate-beta-semialdehyde [(S)-ASA] and pyruvate to 4-hydroxy-tetrahydrodipicolinate (HTPA). The chain is 4-hydroxy-tetrahydrodipicolinate synthase from Lactococcus lactis subsp. cremoris (strain MG1363).